The primary structure comprises 264 residues: S-adenosylmethionine decarboxylase proenzyme (264 aa).

S112 serves as the catalytic Schiff-base intermediate with substrate; via pyruvic acid. S112 carries the pyruvic acid (Ser); by autocatalysis modification. The Proton acceptor; for processing activity role is filled by H117. C140 (proton donor; for catalytic activity) is an active-site residue.

Belongs to the prokaryotic AdoMetDC family. Type 2 subfamily. In terms of assembly, heterooctamer of four alpha and four beta chains arranged as a tetramer of alpha/beta heterodimers. The cofactor is pyruvate. Post-translationally, is synthesized initially as an inactive proenzyme. Formation of the active enzyme involves a self-maturation process in which the active site pyruvoyl group is generated from an internal serine residue via an autocatalytic post-translational modification. Two non-identical subunits are generated from the proenzyme in this reaction, and the pyruvate is formed at the N-terminus of the alpha chain, which is derived from the carboxyl end of the proenzyme. The post-translation cleavage follows an unusual pathway, termed non-hydrolytic serinolysis, in which the side chain hydroxyl group of the serine supplies its oxygen atom to form the C-terminus of the beta chain, while the remainder of the serine residue undergoes an oxidative deamination to produce ammonia and the pyruvoyl group blocking the N-terminus of the alpha chain.

The catalysed reaction is S-adenosyl-L-methionine + H(+) = S-adenosyl 3-(methylsulfanyl)propylamine + CO2. It functions in the pathway amine and polyamine biosynthesis; S-adenosylmethioninamine biosynthesis; S-adenosylmethioninamine from S-adenosyl-L-methionine: step 1/1. In terms of biological role, catalyzes the decarboxylation of S-adenosylmethionine to S-adenosylmethioninamine (dcAdoMet), the propylamine donor required for the synthesis of the polyamines spermine and spermidine from the diamine putrescine. The protein is S-adenosylmethionine decarboxylase proenzyme of Salmonella gallinarum (strain 287/91 / NCTC 13346).